Here is a 969-residue protein sequence, read N- to C-terminus: Defective in germ line development protein 3 (969 aa).

The segment at 34–81 is gld-2-binding; the sequence is MAENAASARKLFVSSALKDIIVNPENFYHDFQQSAQMAEDANQRRQVS. 5 consecutive KH domains span residues 34–109, 113–187, 189–259, 270–342, and 344–419; these read MAEN…MIEI, RVTL…MRRN, HFTV…NEIL, FTLH…IMDL, and PISM…YQKV. The gls-1-binding stretch occupies residues 57 to 471; sequence PENFYHDFQQ…GSNGRRHRSS (415 aa). Disordered stretches follow at residues 459 to 508 and 602 to 711; these read LSDG…SFSE and EQHR…GDIH. A compositionally biased stretch (polar residues) spans 487-508; that stretch reads KQFSESSGGPSRSHTRVSSFSE. Over residues 631–644 the composition is skewed to low complexity; it reads PSSSTGSYYPSTTP. Residues 647-659 are compositionally biased toward basic and acidic residues; sequence RVYEQVREDDLRS. Residues 664 to 676 show a composition bias toward polar residues; that stretch reads RRTSVNGDDQNVE. Basic and acidic residues-rich tracts occupy residues 677–687 and 694–711; these read SMHDQGYERQY and LQKDDQQRWKTGSRGDIH. A gls-1-binding region spans residues 769 to 969; the sequence is LYMHESPHND…DLSLDETSTY (201 aa). The tract at residues 860 to 949 is fbf-1-binding; that stretch reads NGVTKTILEP…VLNEKEKEIA (90 aa). Positions 950 to 969 are disordered; sequence DKSIESTVTQDLSLDETSTY. The span at 954-969 shows a compositional bias: polar residues; that stretch reads ESTVTQDLSLDETSTY.

As to quaternary structure, interacts (via its KH1 domain) with gld-2. Isoform A but not isoform B interacts specifically with fbf-1 and fbf-2 in an RNA-independent manner. Isoform A interacts with gls-1 isoform C. In terms of tissue distribution, expressed in the germline (at protein level). In adult hermaphrodites, first detected in the transition zone (TZ), weakly expressed in the early mitotic region and in pachytene germ cells, and becomes more abundantly expressed as germ cells enter diakinesis (at protein level). Expressed in primary spermatocytes, but not in secondary spermatocytes or adult sperm (at protein level).

The protein localises to the cytoplasm. It is found in the cytoplasmic granule. It localises to the perinuclear region. Its function is as follows. Required maternally for germline survival and embryogenesis. Forms a complex with gls-1 which promotes the oogenic cell fate by freeing the translational repressor fbf to repress sperm promoting factors. Promotes maturation of primary spermatocytes to mature sperm. Required during hermaphrodite development to promote sperm fate, which is critical for determining the normal number of sperm. Promotion of sperm fate is at the expense of oogenesis, possibly through the negative regulation of fbf. Required during male development for the continued production of sperm and inhibition of oogenesis. Together with gld-2, promotes the transition from mitosis to meiosis. Required for polyadenylation of neg-1 mRNA during embryogenesis. This Caenorhabditis elegans protein is Defective in germ line development protein 3.